The following is a 344-amino-acid chain: S-adenosylmethionine:tRNA ribosyltransferase-isomerase (344 aa).

It belongs to the QueA family. In terms of assembly, monomer.

The protein localises to the cytoplasm. It catalyses the reaction 7-aminomethyl-7-carbaguanosine(34) in tRNA + S-adenosyl-L-methionine = epoxyqueuosine(34) in tRNA + adenine + L-methionine + 2 H(+). Its pathway is tRNA modification; tRNA-queuosine biosynthesis. Its function is as follows. Transfers and isomerizes the ribose moiety from AdoMet to the 7-aminomethyl group of 7-deazaguanine (preQ1-tRNA) to give epoxyqueuosine (oQ-tRNA). This chain is S-adenosylmethionine:tRNA ribosyltransferase-isomerase, found in Levilactobacillus brevis (strain ATCC 367 / BCRC 12310 / CIP 105137 / JCM 1170 / LMG 11437 / NCIMB 947 / NCTC 947) (Lactobacillus brevis).